Consider the following 277-residue polypeptide: 3-methyl-2-oxobutanoate hydroxymethyltransferase (277 aa).

Residues Asp54 and Asp93 each coordinate Mg(2+). 3-methyl-2-oxobutanoate-binding positions include 54 to 55 (DS), Asp93, and Lys122. Glu124 is a Mg(2+) binding site. The active-site Proton acceptor is the Glu191.

Belongs to the PanB family. Homodecamer; pentamer of dimers. Mg(2+) is required as a cofactor.

The protein localises to the cytoplasm. The enzyme catalyses 3-methyl-2-oxobutanoate + (6R)-5,10-methylene-5,6,7,8-tetrahydrofolate + H2O = 2-dehydropantoate + (6S)-5,6,7,8-tetrahydrofolate. Its pathway is cofactor biosynthesis; (R)-pantothenate biosynthesis; (R)-pantoate from 3-methyl-2-oxobutanoate: step 1/2. In terms of biological role, catalyzes the reversible reaction in which hydroxymethyl group from 5,10-methylenetetrahydrofolate is transferred onto alpha-ketoisovalerate to form ketopantoate. The sequence is that of 3-methyl-2-oxobutanoate hydroxymethyltransferase from Alkalilimnicola ehrlichii (strain ATCC BAA-1101 / DSM 17681 / MLHE-1).